The primary structure comprises 331 residues: Ubiquinone biosynthesis protein UbiU (331 aa).

[4Fe-4S] cluster is bound by residues C169, C176, C193, and C232.

It belongs to the peptidase U32 family. UbiU subfamily. In terms of assembly, forms a heterodimer with UbiV. [4Fe-4S] cluster is required as a cofactor.

It participates in cofactor biosynthesis; ubiquinone biosynthesis. Functionally, required for O(2)-independent ubiquinone (coenzyme Q) biosynthesis. Together with UbiV, is essential for the C6-hydroxylation reaction in the oxygen-independent ubiquinone biosynthesis pathway. The polypeptide is Ubiquinone biosynthesis protein UbiU (Escherichia coli (strain K12)).